We begin with the raw amino-acid sequence, 135 residues long: Small ribosomal subunit protein uS12 (135 aa).

Residue Asp-89 is modified to 3-methylthioaspartic acid. Residues 108-135 (NKRTVSRSKYGTKKAKATDKKATDNKKK) are disordered. Residues 111 to 122 (TVSRSKYGTKKA) show a composition bias toward basic residues. Residues 123–135 (KATDKKATDNKKK) are compositionally biased toward basic and acidic residues.

This sequence belongs to the universal ribosomal protein uS12 family. In terms of assembly, part of the 30S ribosomal subunit. Contacts proteins S8 and S17. May interact with IF1 in the 30S initiation complex.

Its function is as follows. With S4 and S5 plays an important role in translational accuracy. Interacts with and stabilizes bases of the 16S rRNA that are involved in tRNA selection in the A site and with the mRNA backbone. Located at the interface of the 30S and 50S subunits, it traverses the body of the 30S subunit contacting proteins on the other side and probably holding the rRNA structure together. The combined cluster of proteins S8, S12 and S17 appears to hold together the shoulder and platform of the 30S subunit. The chain is Small ribosomal subunit protein uS12 from Helicobacter pylori (strain P12).